The primary structure comprises 344 residues: Arginine N-succinyltransferase (344 aa).

Succinyl-CoA is bound at residue leucine 125. The active-site Proton donor is histidine 229.

Belongs to the arginine N-succinyltransferase family.

It carries out the reaction succinyl-CoA + L-arginine = N(2)-succinyl-L-arginine + CoA + H(+). It participates in amino-acid degradation; L-arginine degradation via AST pathway; L-glutamate and succinate from L-arginine: step 1/5. Its function is as follows. Catalyzes the transfer of succinyl-CoA to arginine to produce N(2)-succinylarginine. The protein is Arginine N-succinyltransferase of Shigella boydii serotype 18 (strain CDC 3083-94 / BS512).